The sequence spans 372 residues: Transcription factor MYB80 (372 aa).

2 HTH myb-type domains span residues 9–65 (KDNV…RPDL) and 66–116 (KHGE…KKKL). 2 consecutive DNA-binding regions (H-T-H motif) follow at residues 37-61 (WRLI…TNYL) and 89-112 (WSVI…NTKL). Residues 298 to 311 (MWSHQSLYSGSSGT) are compositionally biased toward polar residues. The tract at residues 298–347 (MWSHQSLYSGSSGTEEARRELPEKGNDSVGSSGGDDDAADDGKDSGKGAA) is disordered. Residues 312–323 (EEARRELPEKGN) show a composition bias toward basic and acidic residues.

The protein resides in the nucleus. Its function is as follows. Essential for tapetum development in anthers and microsporogenesis. May regulate the timing of tapetal programmed cell death (PCD) which is critical for pollen development. The chain is Transcription factor MYB80 from Oryza sativa subsp. japonica (Rice).